A 610-amino-acid polypeptide reads, in one-letter code: V-type proton ATPase catalytic subunit A (610 aa).

Residue 245-252 (GAFGCGKT) coordinates ATP.

The protein belongs to the ATPase alpha/beta chains family. V-ATPase is a heteromultimeric enzyme composed of a peripheral catalytic V1 complex (main components: subunits A, B, C, D, E, and F) attached to an integral membrane V0 proton pore complex (main component: the proteolipid protein).

It catalyses the reaction ATP + H2O + 4 H(+)(in) = ADP + phosphate + 5 H(+)(out). Functionally, catalytic subunit of the peripheral V1 complex of vacuolar ATPase. V-ATPase vacuolar ATPase is responsible for acidifying a variety of intracellular compartments in eukaryotic cells. This chain is V-type proton ATPase catalytic subunit A, found in Trypanosoma congolense.